A 276-amino-acid polypeptide reads, in one-letter code: Large ribosomal subunit protein uL2c (276 aa).

The tract at residues 221–276 (RGSVMNPVDHPHGGGEGRAPIGRSRPVTPWGKPALGQKTRKPKKQSNKLILRKRKK) is disordered. Residues 258–276 (KTRKPKKQSNKLILRKRKK) show a composition bias toward basic residues.

This sequence belongs to the universal ribosomal protein uL2 family. In terms of assembly, part of the 50S ribosomal subunit.

The protein resides in the plastid. Its subcellular location is the chloroplast. This is Large ribosomal subunit protein uL2c (rpl2) from Stigeoclonium helveticum (Green alga).